Here is a 99-residue protein sequence, read N- to C-terminus: NADH-quinone oxidoreductase subunit K (99 aa).

The next 3 helical transmembrane spans lie at 2–22, 28–48, and 60–80; these read PVEY…LGVL, LILM…FLAF, and IAFF…AVVI.

It belongs to the complex I subunit 4L family. As to quaternary structure, NDH-1 is composed of 14 different subunits. Subunits NuoA, H, J, K, L, M, N constitute the membrane sector of the complex.

The protein localises to the cell inner membrane. It carries out the reaction a quinone + NADH + 5 H(+)(in) = a quinol + NAD(+) + 4 H(+)(out). Its function is as follows. NDH-1 shuttles electrons from NADH, via FMN and iron-sulfur (Fe-S) centers, to quinones in the respiratory chain. The immediate electron acceptor for the enzyme in this species is believed to be ubiquinone. Couples the redox reaction to proton translocation (for every two electrons transferred, four hydrogen ions are translocated across the cytoplasmic membrane), and thus conserves the redox energy in a proton gradient. The polypeptide is NADH-quinone oxidoreductase subunit K (Anaeromyxobacter dehalogenans (strain 2CP-C)).